Consider the following 413-residue polypeptide: Alpha-1-antitrypsin 1-2 (413 aa).

Positions Met-1–Ala-24 are cleaved as a signal peptide. Residues Asn-64, Asn-101, and Asn-265 are each glycosylated (N-linked (GlcNAc...) asparagine). The tract at residues Ala-368–His-387 is RCL.

The protein belongs to the serpin family.

It localises to the secreted. Inhibitor of serine proteases. Its primary target is elastase, but it also has a moderate affinity for plasmin and thrombin. This Mus musculus (Mouse) protein is Alpha-1-antitrypsin 1-2 (Serpina1b).